The sequence spans 1047 residues: Probable alpha-mannosidase At5g66150 (1047 aa).

The first 27 residues, 1-27, serve as a signal peptide directing secretion; sequence MEKPGMSLLKGSLCVIVFLLLLSLVES. The Zn(2+) site is built by H56, D58, and D178. Residues N280, N287, and N345 are each glycosylated (N-linked (GlcNAc...) asparagine). H419 is a binding site for Zn(2+). 2 cysteine pairs are disulfide-bonded: C455/C465 and C476/C484. Residues N480, N508, N541, N605, N606, N668, N780, and N857 are each glycosylated (N-linked (GlcNAc...) asparagine). A disulfide bond links C855 and C860.

Belongs to the glycosyl hydrolase 38 family. As to quaternary structure, homodimer. Zn(2+) serves as cofactor.

It localises to the vacuole. It carries out the reaction Hydrolysis of terminal, non-reducing alpha-D-mannose residues in alpha-D-mannosides.. In terms of biological role, liberates mannose from p-nitrophenyl-alpha-D-mannoside in vitro. This Arabidopsis thaliana (Mouse-ear cress) protein is Probable alpha-mannosidase At5g66150.